The primary structure comprises 118 residues: NADPH-dependent 7-cyano-7-deazaguanine reductase (118 aa).

Cysteine 31 serves as the catalytic Thioimide intermediate. Aspartate 38 functions as the Proton donor in the catalytic mechanism. Residues 53–55 (VEL) and 72–73 (YE) contribute to the substrate site.

It belongs to the GTP cyclohydrolase I family. QueF type 1 subfamily.

The protein resides in the cytoplasm. It carries out the reaction 7-aminomethyl-7-carbaguanine + 2 NADP(+) = 7-cyano-7-deazaguanine + 2 NADPH + 3 H(+). It functions in the pathway tRNA modification; tRNA-queuosine biosynthesis. Catalyzes the NADPH-dependent reduction of 7-cyano-7-deazaguanine (preQ0) to 7-aminomethyl-7-deazaguanine (preQ1). The chain is NADPH-dependent 7-cyano-7-deazaguanine reductase from Chlorobium phaeobacteroides (strain BS1).